The sequence spans 774 residues: Shugoshin (774 aa).

Positions 41–105 (SLRIRGLENE…AELSSLLASL (65 aa)) form a coiled coil. 3 disordered regions span residues 106–151 (GEPP…QEGR), 205–661 (SPSP…DAQL), and 676–774 (CASP…SMML). Basic and acidic residues predominate over residues 109-120 (PSKRRLSEERRY). Acidic residues predominate over residues 214–224 (AEETETTEQVE). Positions 297–318 (GDNQNEPNKATKLQQGKENGNE) are enriched in polar residues. The segment covering 382–398 (KGKEKVDLPAPDKKSAV) has biased composition (basic and acidic residues). Residues 399–409 (EETQGNSTSAF) show a composition bias toward polar residues. Composition is skewed to basic and acidic residues over residues 482-495 (NLRDKMRRPTKELF) and 549-558 (FEKEKEKEPQ). 2 stretches are compositionally biased toward polar residues: residues 595–604 (PSVQEQSTLN) and 640–651 (QSMSRSVPTIPT). The span at 706–722 (ASSAASTETTATASAKP) shows a compositional bias: low complexity. Over residues 743–754 (LAQEEEDEEDVG) the composition is skewed to acidic residues. The span at 765 to 774 (RASRRRSMML) shows a compositional bias: basic residues.

The protein belongs to the shugoshin family.

It localises to the nucleus. The protein localises to the chromosome. The protein resides in the centromere. In terms of biological role, plays a central role in chromosome cohesion during cell division by preventing premature dissociation of cohesin complex from centromeres after prophase, when most of cohesin complex dissociates from chromosomes arms. This is Shugoshin (sgo-1) from Neurospora crassa (strain ATCC 24698 / 74-OR23-1A / CBS 708.71 / DSM 1257 / FGSC 987).